The following is a 326-amino-acid chain: Protease HtpX homolog (326 aa).

2 helical membrane passes run 10 to 30 (LNMA…ALAV) and 41 to 61 (VGLM…QWLF). A Zn(2+)-binding site is contributed by histidine 147. Glutamate 148 is a catalytic residue. Position 151 (histidine 151) interacts with Zn(2+). The next 2 membrane-spanning stretches (helical) occupy residues 159–179 (LLMA…WIFW) and 197–217 (LLFL…LLVL). A Zn(2+)-binding site is contributed by glutamate 224.

The protein belongs to the peptidase M48B family. The cofactor is Zn(2+).

It localises to the cell membrane. The protein is Protease HtpX homolog of Saccharolobus islandicus (strain Y.N.15.51 / Yellowstone #2) (Sulfolobus islandicus).